A 229-amino-acid chain; its full sequence is Adenylate kinase 1 (229 aa).

Position 42–47 (42–47) interacts with ATP; the sequence is GCGKGT. Residue S62 is modified to Phosphoserine. Residues S63, R68, 118–121, and Q125 contribute to the AMP site; that span reads GYPR. R156 serves as a coordination point for ATP. Positions 164 and 175 each coordinate AMP.

This sequence belongs to the adenylate kinase family. AK1 subfamily. In terms of tissue distribution, high expression levels in the thorax, suggesting a possible function in the gastrointestinal or reproductive systems.

The protein localises to the cytoplasm. It carries out the reaction AMP + ATP = 2 ADP. In terms of biological role, catalyzes the reversible transfer of the terminal phosphate group between ATP and AMP. Plays an important role in cellular energy homeostasis and in adenine nucleotide metabolism. The polypeptide is Adenylate kinase 1 (Drosophila melanogaster (Fruit fly)).